Consider the following 255-residue polypeptide: Pimeloyl-[acyl-carrier protein] methyl ester esterase (255 aa).

The 226-residue stretch at 16 to 241 (LVLLHGWGMN…QSSHAPFMTE (226 aa)) folds into the AB hydrolase-1 domain. Residues tryptophan 22, 82 to 83 (SL), and 143 to 147 (FMALQ) each bind substrate. Serine 82 (nucleophile) is an active-site residue. Catalysis depends on residues aspartate 207 and histidine 235. Histidine 235 serves as a coordination point for substrate.

Belongs to the AB hydrolase superfamily. Carboxylesterase BioH family. Monomer.

The protein localises to the cytoplasm. It carries out the reaction 6-carboxyhexanoyl-[ACP] methyl ester + H2O = 6-carboxyhexanoyl-[ACP] + methanol + H(+). It functions in the pathway cofactor biosynthesis; biotin biosynthesis. In terms of biological role, the physiological role of BioH is to remove the methyl group introduced by BioC when the pimeloyl moiety is complete. It allows to synthesize pimeloyl-ACP via the fatty acid synthetic pathway through the hydrolysis of the ester bonds of pimeloyl-ACP esters. The chain is Pimeloyl-[acyl-carrier protein] methyl ester esterase from Vibrio parahaemolyticus serotype O3:K6 (strain RIMD 2210633).